A 549-amino-acid chain; its full sequence is Cation/acetate symporter ActP (549 aa).

13 helical membrane passes run 33-53, 77-97, 103-123, 148-168, 183-203, 206-226, 262-282, 303-323, 355-375, 404-424, 428-448, 464-484, and 493-513; these read WQAIIMFLIFVVFTLGITYWA, LAIAGDYMSAASFLGISALVF, GLIYSLGFLVGWPIILFLIAE, ILSACGSLVVVALYLIAQMVG, IAVVLVGVLMMMYVLFGGMLA, WVQIIKAVLLLFGASFMAFMV, ISALSLGLGLMFGTAGLPHIL, GFMGYFYILTFIIGFGAIMLV, LFLGFISAVAFATILAVVAGL, VSKITVLILGVIAIILGVLFE, IAFMVGLAFAIAASCNFPIIL, GGWLGLITAVVLMILGPTIWV, and IFPYEYPALFSISVAFLGIWL.

This sequence belongs to the sodium:solute symporter (SSF) (TC 2.A.21) family.

The protein resides in the cell inner membrane. In terms of biological role, transports acetate. This Escherichia coli O1:K1 / APEC protein is Cation/acetate symporter ActP.